Here is a 455-residue protein sequence, read N- to C-terminus: Probable glycine dehydrogenase (decarboxylating) subunit 1 (455 aa).

Belongs to the GcvP family. N-terminal subunit subfamily. As to quaternary structure, the glycine cleavage system is composed of four proteins: P, T, L and H. In this organism, the P 'protein' is a heterodimer of two subunits.

The catalysed reaction is N(6)-[(R)-lipoyl]-L-lysyl-[glycine-cleavage complex H protein] + glycine + H(+) = N(6)-[(R)-S(8)-aminomethyldihydrolipoyl]-L-lysyl-[glycine-cleavage complex H protein] + CO2. Its function is as follows. The glycine cleavage system catalyzes the degradation of glycine. The P protein binds the alpha-amino group of glycine through its pyridoxal phosphate cofactor; CO(2) is released and the remaining methylamine moiety is then transferred to the lipoamide cofactor of the H protein. This is Probable glycine dehydrogenase (decarboxylating) subunit 1 from Saccharolobus islandicus (strain Y.N.15.51 / Yellowstone #2) (Sulfolobus islandicus).